The chain runs to 971 residues: Exportin-2 (971 aa).

The residue at position 1 (Met1) is an N-acetylmethionine. Positions 29-102 (AEKFLESVEG…KANIVHLMLS (74 aa)) constitute an Importin N-terminal domain. Ser112 carries the phosphoserine modification. 2 positions are modified to N6-acetyllysine: Lys574 and Lys824. Ser931 is modified (phosphoserine).

It belongs to the XPO2/CSE1 family. As to quaternary structure, found in a complex with CSE1L/XPO2, Ran and KPNA2. Binds with high affinity to importin-alpha only in the presence of RanGTP. The complex is dissociated by the combined action of RanBP1 and RanGAP1. Interacts with CFTR. Detected in brain, placenta, ovary, testis and trachea (at protein level). Widely expressed. Highly expressed in testis and in proliferating cells.

It localises to the cytoplasm. It is found in the nucleus. Functionally, export receptor for importin-alpha. Mediates importin-alpha re-export from the nucleus to the cytoplasm after import substrates (cargos) have been released into the nucleoplasm. In the nucleus binds cooperatively to importin-alpha and to the GTPase Ran in its active GTP-bound form. Docking of this trimeric complex to the nuclear pore complex (NPC) is mediated through binding to nucleoporins. Upon transit of a nuclear export complex into the cytoplasm, disassembling of the complex and hydrolysis of Ran-GTP to Ran-GDP (induced by RANBP1 and RANGAP1, respectively) cause release of the importin-alpha from the export receptor. CSE1L/XPO2 then return to the nuclear compartment and mediate another round of transport. The directionality of nuclear export is thought to be conferred by an asymmetric distribution of the GTP- and GDP-bound forms of Ran between the cytoplasm and nucleus. This chain is Exportin-2 (CSE1L), found in Homo sapiens (Human).